Reading from the N-terminus, the 146-residue chain is Multiple coagulation factor deficiency protein 2 (146 aa).

A signal peptide spans 1-26 (MTMRSLLRTPFLCGLLWAFCAPGARA). The region spanning 68–103 (SPQELQLHYFKMHDYDGNNLLDGLELSTAITHVHKE) is the EF-hand 1 domain. Ca(2+) contacts are provided by aspartate 81, aspartate 83, asparagine 85, and glutamate 92. Position 106 is a phosphoserine (serine 106). Residues 116-146 (ELINIIDGVLRDDDKNNDGYIDYAEFAKSLQ) enclose the EF-hand 2 domain. The Ca(2+) site is built by aspartate 129, asparagine 131, aspartate 133, tyrosine 135, and glutamate 140.

In terms of assembly, interacts in a calcium-dependent manner with LMAN1.

It is found in the endoplasmic reticulum-Golgi intermediate compartment. The protein resides in the endoplasmic reticulum. Its subcellular location is the golgi apparatus. Its function is as follows. The MCFD2-LMAN1 complex forms a specific cargo receptor for the ER-to-Golgi transport of selected proteins. Plays a role in the secretion of coagulation factors. This is Multiple coagulation factor deficiency protein 2 (MCFD2) from Homo sapiens (Human).